Consider the following 365-residue polypeptide: Coxsackievirus and adenovirus receptor (365 aa).

The first 19 residues, 1–19 (MALLLCFVLLCGVVDFARS), serve as a signal peptide directing secretion. Ig-like C2-type domains follow at residues 20-134 (LSIT…KKIH) and 141-228 (PSGA…LRLN). Topologically, residues 20–237 (LSITTPEEMI…NVVPPSNKAG (218 aa)) are extracellular. Cystine bridges form between Cys-41/Cys-120 and Cys-162/Cys-212. Asn-106 and Asn-201 each carry an N-linked (GlcNAc...) asparagine glycan. The helical transmembrane segment at 238 to 258 (LIAGAIIGTLLALALIGLIIF) threads the bilayer. S-palmitoyl cysteine attachment occurs at residues Cys-259 and Cys-260. The Cytoplasmic segment spans residues 259–365 (CCRKKRREEK…PAQSKDGSIV (107 aa)). Residues 269–282 (YEKEVHHDIREDVP) are compositionally biased toward basic and acidic residues. Positions 269-343 (YEKEVHHDIR…TLPPAKVAAP (75 aa)) are disordered. The segment covering 286–322 (SRTSTARSYIGSNHSSLGSMSPSNMEGYSKTQYNQVP) has biased composition (polar residues). 6 positions are modified to phosphoserine: Ser-297, Ser-304, Ser-306, Ser-323, Ser-332, and Ser-363. Positions 360–365 (KDGSIV) match the PDZ-binding motif.

In terms of assembly, monomer. May form homodimer. Interacts with LNX, MAGI1, DLG4, PRKCABP, TJP1 and CTNNB1. Interacts with MPDZ; recruits MPDZ to intercellular contact sites. Interacts with JAML (homodimeric form). Secreted isoform 3, isoform 4 and isoform 5 can interact with the extracellular domain of the receptor. (Microbial infection) Interacts with adenovirus subgroups A, C, D, E and F fiber proteins as well as coxsackievirus B1, B2, B3, B4, B5 and B6 capsid proteins. Post-translationally, N-glycosylated. Palmitoylated on Cys-259 and/or Cys-260; required for proper localization to the plasma membrane. In terms of tissue distribution, expressed in pancreas, brain, heart, small intestine, testis, prostate and at a lower level in liver and lung. Isoform 5 is ubiquitously expressed. Isoform 3 is expressed in heart, lung and pancreas. In skeletal muscle, isoform 1 is found at the neuromuscular junction and isoform 2 is found in blood vessels. In cardiac muscle, isoform 1 and isoform 2 are found at intercalated disks. In heart expressed in subendothelial layers of the vessel wall but not in the luminal endothelial surface. Expression is elevated in hearts with dilated cardiomyopathy.

It is found in the cell membrane. Its subcellular location is the basolateral cell membrane. The protein localises to the cell junction. It localises to the tight junction. The protein resides in the adherens junction. It is found in the secreted. Component of the epithelial apical junction complex that may function as a homophilic cell adhesion molecule and is essential for tight junction integrity. Also involved in transepithelial migration of leukocytes through adhesive interactions with JAML a transmembrane protein of the plasma membrane of leukocytes. The interaction between both receptors also mediates the activation of gamma-delta T-cells, a subpopulation of T-cells residing in epithelia and involved in tissue homeostasis and repair. Upon epithelial CXADR-binding, JAML induces downstream cell signaling events in gamma-delta T-cells through PI3-kinase and MAP kinases. It results in proliferation and production of cytokines and growth factors by T-cells that in turn stimulate epithelial tissues repair. Its function is as follows. (Microbial infection) Acts as a receptor for adenovirus type C. In terms of biological role, (Microbial infection) Acts as a receptor for Coxsackievirus B1 to B6. The sequence is that of Coxsackievirus and adenovirus receptor (CXADR) from Homo sapiens (Human).